Reading from the N-terminus, the 429-residue chain is Ribosomal RNA small subunit methyltransferase B (429 aa).

S-adenosyl-L-methionine contacts are provided by residues 254 to 260 (CAAPGGK), Asp-277, Asp-303, and Asp-322. Cys-375 acts as the Nucleophile in catalysis.

Belongs to the class I-like SAM-binding methyltransferase superfamily. RsmB/NOP family.

Its subcellular location is the cytoplasm. The enzyme catalyses cytidine(967) in 16S rRNA + S-adenosyl-L-methionine = 5-methylcytidine(967) in 16S rRNA + S-adenosyl-L-homocysteine + H(+). Specifically methylates the cytosine at position 967 (m5C967) of 16S rRNA. The chain is Ribosomal RNA small subunit methyltransferase B from Shigella boydii serotype 18 (strain CDC 3083-94 / BS512).